Here is a 415-residue protein sequence, read N- to C-terminus: Multidrug resistance protein MdtA (415 aa).

The N-terminal stretch at 1–21 (MKGSYKSRWVIVIVVVIAAIA) is a signal peptide. The span at 31–47 (DSQSAAPGATKQAQQSP) shows a compositional bias: polar residues. Disordered stretches follow at residues 31 to 60 (DSQS…GPLA) and 392 to 415 (EAQS…GARS). A compositionally biased stretch (basic and acidic residues) spans 399-415 (PEEKATSREYAKKGARS).

It belongs to the membrane fusion protein (MFP) (TC 8.A.1) family. In terms of assembly, part of a tripartite efflux system composed of MdtA, MdtB and MdtC.

The protein localises to the cell inner membrane. Its function is as follows. The MdtABC tripartite complex confers resistance against novobiocin and deoxycholate. In Escherichia coli O8 (strain IAI1), this protein is Multidrug resistance protein MdtA.